The chain runs to 349 residues: 4-hydroxy-3-methylbut-2-en-1-yl diphosphate synthase (flavodoxin) (349 aa).

Residues cysteine 264, cysteine 267, cysteine 299, and glutamate 306 each coordinate [4Fe-4S] cluster.

This sequence belongs to the IspG family. [4Fe-4S] cluster serves as cofactor.

It catalyses the reaction (2E)-4-hydroxy-3-methylbut-2-enyl diphosphate + oxidized [flavodoxin] + H2O + 2 H(+) = 2-C-methyl-D-erythritol 2,4-cyclic diphosphate + reduced [flavodoxin]. The protein operates within isoprenoid biosynthesis; isopentenyl diphosphate biosynthesis via DXP pathway; isopentenyl diphosphate from 1-deoxy-D-xylulose 5-phosphate: step 5/6. Converts 2C-methyl-D-erythritol 2,4-cyclodiphosphate (ME-2,4cPP) into 1-hydroxy-2-methyl-2-(E)-butenyl 4-diphosphate. The protein is 4-hydroxy-3-methylbut-2-en-1-yl diphosphate synthase (flavodoxin) of Clostridium tetani (strain Massachusetts / E88).